Here is a 165-residue protein sequence, read N- to C-terminus: UPF0114 protein in repA1-repA2 intergenic region (165 aa).

Transmembrane regions (helical) follow at residues 15-35 (LMFP…VKFF), 53-73 (LVLI…LVMV), and 136-156 (IMWC…MAYI).

The protein belongs to the UPF0114 family.

It is found in the cell membrane. In Buchnera aphidicola subsp. Thelaxes suberi, this protein is UPF0114 protein in repA1-repA2 intergenic region.